Consider the following 160-residue polypeptide: Nucleotide-binding protein VP1617 (160 aa).

Belongs to the YajQ family.

Functionally, nucleotide-binding protein. In Vibrio parahaemolyticus serotype O3:K6 (strain RIMD 2210633), this protein is Nucleotide-binding protein VP1617.